An 84-amino-acid chain; its full sequence is Small ribosomal subunit protein bS16 (84 aa).

Belongs to the bacterial ribosomal protein bS16 family.

The chain is Small ribosomal subunit protein bS16 from Acaryochloris marina (strain MBIC 11017).